A 387-amino-acid polypeptide reads, in one-letter code: 4-hydroxy-3-methylbut-2-en-1-yl diphosphate synthase (flavodoxin) (387 aa).

4 residues coordinate [4Fe-4S] cluster: C280, C283, C315, and E322.

Belongs to the IspG family. [4Fe-4S] cluster is required as a cofactor.

It catalyses the reaction (2E)-4-hydroxy-3-methylbut-2-enyl diphosphate + oxidized [flavodoxin] + H2O + 2 H(+) = 2-C-methyl-D-erythritol 2,4-cyclic diphosphate + reduced [flavodoxin]. Its pathway is isoprenoid biosynthesis; isopentenyl diphosphate biosynthesis via DXP pathway; isopentenyl diphosphate from 1-deoxy-D-xylulose 5-phosphate: step 5/6. Converts 2C-methyl-D-erythritol 2,4-cyclodiphosphate (ME-2,4cPP) into 1-hydroxy-2-methyl-2-(E)-butenyl 4-diphosphate. This Mycobacterium bovis (strain ATCC BAA-935 / AF2122/97) protein is 4-hydroxy-3-methylbut-2-en-1-yl diphosphate synthase (flavodoxin).